Here is a 393-residue protein sequence, read N- to C-terminus: Selenide, water dikinase (393 aa).

The disordered stretch occupies residues 1-21 (MSEKEGKVIPETNGMKRPRFD). The active site involves Cys42. Residues Lys45, 68 to 70 (GMD), Asp93, Asp116, and 167 to 170 (GGQT) contribute to the ATP site. Residue Asp70 coordinates Mg(2+). Position 116 (Asp116) interacts with Mg(2+). Residue Asp273 coordinates Mg(2+).

This sequence belongs to the selenophosphate synthase 1 family. Class I subfamily. In terms of assembly, homodimer. Mg(2+) serves as cofactor.

It carries out the reaction hydrogenselenide + ATP + H2O = selenophosphate + AMP + phosphate + 2 H(+). In terms of biological role, synthesizes selenophosphate from selenide and ATP. The protein is Selenide, water dikinase of Trypanosoma brucei brucei (strain 927/4 GUTat10.1).